The sequence spans 643 residues: Extracellular metalloproteinase 4 (643 aa).

The signal sequence occupies residues 1-18 (MHGLLLAGLLALPLNVLA). A propeptide spanning residues 19–254 (HPTESHSSGI…VHSVVDYVSA (236 aa)) is cleaved from the precursor. Positions 47–57 (TKSDAVPKQDD) are enriched in basic and acidic residues. Residues 47-71 (TKSDAVPKQDDESFTTSSTGDDNVS) form a disordered region. Over residues 60-71 (FTTSSTGDDNVS) the composition is skewed to polar residues. N-linked (GlcNAc...) asparagine glycans are attached at residues asparagine 271 and asparagine 420. Histidine 437 provides a ligand contact to Zn(2+). Residue glutamate 438 is part of the active site. Histidine 441 contacts Zn(2+). N-linked (GlcNAc...) asparagine glycosylation occurs at asparagine 510.

This sequence belongs to the peptidase M36 family. Zn(2+) serves as cofactor.

The protein resides in the secreted. In terms of biological role, secreted metalloproteinase probably acting as a virulence factor. The chain is Extracellular metalloproteinase 4 (MEP4) from Trichophyton equinum (Horse ringworm fungus).